The primary structure comprises 294 residues: Undecaprenyl-diphosphatase (294 aa).

6 helical membrane-spanning segments follow: residues 39-59 (PGAA…ILYF), 93-113 (ATLG…GFTL), 123-143 (NLWI…MVDA), 198-218 (SFLM…IKAV), 232-252 (PTLV…IGFL), and 268-288 (IGLA…AIDP).

Belongs to the UppP family.

The protein resides in the cell membrane. It catalyses the reaction di-trans,octa-cis-undecaprenyl diphosphate + H2O = di-trans,octa-cis-undecaprenyl phosphate + phosphate + H(+). Functionally, catalyzes the dephosphorylation of undecaprenyl diphosphate (UPP). Confers resistance to bacitracin. This Bifidobacterium longum (strain DJO10A) protein is Undecaprenyl-diphosphatase.